We begin with the raw amino-acid sequence, 159 residues long: MADHSKNEAAAYALKLLSLRSHSRFELAGKMLRKGYRKELVEEVLDYLVQKQLIDDEAFAKELIGSRSRRKPVGKRKMQFDLIRKGVPENIADALLKEYDGAELCYRAGVRKAAALKGRDESERKKKLEVFLRNRGFDWPVIKETITRLFQTGPECEND.

Belongs to the RecX family.

The protein resides in the cytoplasm. Modulates RecA activity. This is Regulatory protein RecX from Chlorobium limicola (strain DSM 245 / NBRC 103803 / 6330).